The chain runs to 106 residues: Transcription and mRNA export factor SUS1 (106 aa).

This sequence belongs to the ENY2 family. In terms of assembly, component of the nuclear pore complex (NPC)-associated TREX-2 complex (transcription and export complex 2), composed of at least SUS1, SAC3, THP1, SEM1, and CDC31. TREX-2 contains 2 SUS1 chains. The TREX-2 complex interacts with the nucleoporin NUP1. Component of the 1.8 MDa SAGA transcription coactivator-HAT complex. SAGA is built of 5 distinct domains with specialized functions. Within the SAGA complex, SUS1, SGF11, SGF73 and UBP8 form an additional subcomplex of SAGA called the DUB module (deubiquitination module). Interacts directly with THP1, SAC3, SGF11, and with the RNA polymerase II.

The protein localises to the nucleus. Its subcellular location is the nucleoplasm. The protein resides in the cytoplasm. It is found in the P-body. Its function is as follows. Involved in mRNA export coupled transcription activation by association with both the TREX-2 and the SAGA complexes. At the promoters, SAGA is required for recruitment of the basal transcription machinery. It influences RNA polymerase II transcriptional activity through different activities such as TBP interaction and promoter selectivity, interaction with transcription activators, and chromatin modification through histone acetylation and deubiquitination. Within the SAGA complex, participates in a subcomplex required for deubiquitination of H2B and for the maintenance of steady-state H3 methylation levels. The TREX-2 complex functions in docking export-competent ribonucleoprotein particles (mRNPs) to the nuclear entrance of the nuclear pore complex (nuclear basket). TREX-2 participates in mRNA export and accurate chromatin positioning in the nucleus by tethering genes to the nuclear periphery. May also be involved in cytoplasmic mRNA decay by interaction with components of P-bodies. The polypeptide is Transcription and mRNA export factor SUS1 (Mycosarcoma maydis (Corn smut fungus)).